The sequence spans 331 residues: Lipoyl synthase (331 aa).

Residues 1–33 (MSDALIASSSEAPQSPAEQYDPTRKQKSADKTA) form a disordered region. The segment covering 7 to 19 (ASSSEAPQSPAEQ) has biased composition (low complexity). Positions 21-33 (DPTRKQKSADKTA) are enriched in basic and acidic residues. Residues cysteine 78, cysteine 83, cysteine 89, cysteine 104, cysteine 108, cysteine 111, and serine 318 each coordinate [4Fe-4S] cluster. One can recognise a Radical SAM core domain in the interval 89–307 (CFGKGTATFM…EEEAYKMGFT (219 aa)).

The protein belongs to the radical SAM superfamily. Lipoyl synthase family. [4Fe-4S] cluster serves as cofactor.

Its subcellular location is the cytoplasm. The enzyme catalyses [[Fe-S] cluster scaffold protein carrying a second [4Fe-4S](2+) cluster] + N(6)-octanoyl-L-lysyl-[protein] + 2 oxidized [2Fe-2S]-[ferredoxin] + 2 S-adenosyl-L-methionine + 4 H(+) = [[Fe-S] cluster scaffold protein] + N(6)-[(R)-dihydrolipoyl]-L-lysyl-[protein] + 4 Fe(3+) + 2 hydrogen sulfide + 2 5'-deoxyadenosine + 2 L-methionine + 2 reduced [2Fe-2S]-[ferredoxin]. The protein operates within protein modification; protein lipoylation via endogenous pathway; protein N(6)-(lipoyl)lysine from octanoyl-[acyl-carrier-protein]: step 2/2. Its function is as follows. Catalyzes the radical-mediated insertion of two sulfur atoms into the C-6 and C-8 positions of the octanoyl moiety bound to the lipoyl domains of lipoate-dependent enzymes, thereby converting the octanoylated domains into lipoylated derivatives. This chain is Lipoyl synthase, found in Cupriavidus pinatubonensis (strain JMP 134 / LMG 1197) (Cupriavidus necator (strain JMP 134)).